Here is a 263-residue protein sequence, read N- to C-terminus: Triosephosphate isomerase (263 aa).

10-12 contacts substrate; it reads NWK. Catalysis depends on His104, which acts as the Electrophile. The active-site Proton acceptor is Glu176. Residues Gly182, Ser221, and 242–243 each bind substrate; that span reads GG.

This sequence belongs to the triosephosphate isomerase family. As to quaternary structure, homodimer.

Its subcellular location is the cytoplasm. The enzyme catalyses D-glyceraldehyde 3-phosphate = dihydroxyacetone phosphate. It participates in carbohydrate biosynthesis; gluconeogenesis. The protein operates within carbohydrate degradation; glycolysis; D-glyceraldehyde 3-phosphate from glycerone phosphate: step 1/1. In terms of biological role, involved in the gluconeogenesis. Catalyzes stereospecifically the conversion of dihydroxyacetone phosphate (DHAP) to D-glyceraldehyde-3-phosphate (G3P). The polypeptide is Triosephosphate isomerase (Haemophilus influenzae (strain 86-028NP)).